Here is a 365-residue protein sequence, read N- to C-terminus: Succinyl-diaminopimelate desuccinylase (365 aa).

Position 64 (histidine 64) interacts with Zn(2+). The active site involves aspartate 66. Aspartate 95 serves as a coordination point for Zn(2+). Residue glutamate 125 is the Proton acceptor of the active site. Residues glutamate 126, glutamate 154, and histidine 339 each coordinate Zn(2+).

Belongs to the peptidase M20A family. DapE subfamily. Homodimer. It depends on Zn(2+) as a cofactor. Co(2+) is required as a cofactor.

It carries out the reaction N-succinyl-(2S,6S)-2,6-diaminopimelate + H2O = (2S,6S)-2,6-diaminopimelate + succinate. It participates in amino-acid biosynthesis; L-lysine biosynthesis via DAP pathway; LL-2,6-diaminopimelate from (S)-tetrahydrodipicolinate (succinylase route): step 3/3. In terms of biological role, catalyzes the hydrolysis of N-succinyl-L,L-diaminopimelic acid (SDAP), forming succinate and LL-2,6-diaminopimelate (DAP), an intermediate involved in the bacterial biosynthesis of lysine and meso-diaminopimelic acid, an essential component of bacterial cell walls. The polypeptide is Succinyl-diaminopimelate desuccinylase (Sulfurimonas denitrificans (strain ATCC 33889 / DSM 1251) (Thiomicrospira denitrificans (strain ATCC 33889 / DSM 1251))).